The primary structure comprises 313 residues: E3 ubiquitin-protein ligase RNF126 (313 aa).

Residue Ala2 is modified to N-acetylalanine. Ser5 carries the phosphoserine modification. A required for interaction with BAG6 region spans residues 5–101 (SPQPGRYFCH…FEIPTFPPGA (97 aa)). Zn(2+)-binding residues include Cys13, Cys16, Cys29, and Cys32. The segment at 13 to 32 (CHCCSVEIVPRLPDYICPRC) adopts a C4-type zinc-finger fold. 2 disordered regions span residues 42 to 64 (EETRSAENGSAPSTASADQSRQQ) and 96 to 128 (TFPPGAQADDSRDPESRREREQHSRHRYGARQP). Residues 47-64 (AENGSAPSTASADQSRQQ) are compositionally biased toward polar residues. The segment covering 104–117 (DDSRDPESRREREQ) has biased composition (basic and acidic residues). The span at 118–128 (HSRHRYGARQP) shows a compositional bias: basic residues. The segment at 203 to 306 (TGPPPADKEK…SSSSSSSPGN (104 aa)) is sufficient for interaction with AICDA. Residues 232–273 (CPVCKDDYGLGEHVRQLPCNHLFHDGCIVPWLEQHDSCPVCR) form an RING-type zinc finger. A disordered region spans residues 280 to 313 (NTATDPPGLAGVSFSSSSSSSSSSPGNENPASSS). Low complexity predominate over residues 292-313 (SFSSSSSSSSSSPGNENPASSS).

In terms of assembly, interacts with CCDC50, EGFR, FLT3 and SCAMP3. Interacts with BAG6 (via ubiquitin-like domain); required for BAG6-dependent ubiquitination of proteins mislocalized to the cytosol. Interacts with CDKN1A. Interacts with AICDA. In terms of processing, ubiquitinated. May undergo autoubiquitination.

The protein resides in the cytoplasm. The protein localises to the nucleus. The catalysed reaction is S-ubiquitinyl-[E2 ubiquitin-conjugating enzyme]-L-cysteine + [acceptor protein]-L-lysine = [E2 ubiquitin-conjugating enzyme]-L-cysteine + N(6)-ubiquitinyl-[acceptor protein]-L-lysine.. Its pathway is protein modification; protein ubiquitination. In terms of biological role, E3 ubiquitin-protein ligase that mediates ubiquitination oF target proteins. Depending on the associated E2 ligase, mediates 'Lys-27'-, 'Lys-29'-, 'Lys-48'- and/or 'Lys-63'-linked polyubiquitination of substrates. Part of a BAG6-dependent quality control process ensuring that proteins of the secretory pathway that are mislocalized to the cytosol are degraded by the proteasome. Probably acts by providing the ubiquitin ligase activity associated with the BAG6 complex and be responsible for ubiquitination of the hydrophobic mislocalized proteins and their targeting to the proteasome. May also play a role in the endosomal recycling of IGF2R, the cation-independent mannose-6-phosphate receptor. May play a role in the endosomal sorting and degradation of several membrane receptors including EGFR, FLT3, MET and CXCR4, by mediating their ubiquitination. By ubiquitinating CDKN1A/p21 and targeting it for degradation, may also promote cell proliferation. May monoubiquitinate AICDA. Acts as a regulator of DNA repair by mediating 'Lys-27'- and 'Lys-29'-linked polyubiquitination of MRE11, thereby promoting the exonuclease activity of MRE11. This chain is E3 ubiquitin-protein ligase RNF126, found in Bos taurus (Bovine).